Reading from the N-terminus, the 367-residue chain is Probable butyrate kinase (367 aa).

The protein belongs to the acetokinase family.

It localises to the cytoplasm. The enzyme catalyses butanoate + ATP = butanoyl phosphate + ADP. This is Probable butyrate kinase from Bacillus cereus (strain G9842).